The chain runs to 596 residues: uncharacterized protein (596 aa).

The 160-residue stretch at 44–203 (KYLASQPRDF…PFVTYALDAD (160 aa)) folds into the Helicase ATP-binding domain. The Helicase C-terminal domain maps to 285–432 (RLRQLRTHVP…PHRESTDNPL (148 aa)). Disordered stretches follow at residues 420–444 (LGKP…QTEQ) and 506–533 (EQLQ…SVHG). Residues 510 to 523 (KRTAAQQASSTPDR) show a composition bias toward polar residues.

It to M.tuberculosis Rv2917.

This is an uncharacterized protein from Mycobacterium leprae (strain TN).